Reading from the N-terminus, the 428-residue chain is MYKEPFQPTYEYALECDKHDELKDFQTEFYKKEGTIYLDGNSLGLLSKRAEKSLLTLLDSWKEYGIDGWTEGEHPWFFLSEKLGKLTAPLIGALPEETIVTGSTTTNIHQVIATFYEPKGIRTKILADELTFPSDIYALQSQIRLKGLDPEEHLVRVKSRDGRTLSEEDIIHAMEDDIALILLPSVLYRSGQILDMKRLTTEAHKRGIHIGFDLCHSIGSIPHHFKDWDVDFAVWCNYKYLNAGPGSVAGLYVNSKHFNRLPGLSGWFSSRKDKQFDMEHTLTAADHAGAYQIGTPHVLSTAPLIGSLEIFKDAGIERLREKSLHITRYMLNLIGHELKDFEFTIGNPLEDEKRGGHIYLEHAEAARICKALKANGVIPDFRAPNGVRLAPVALYNTYEEVWKSVQILKKIMKNEEYKQFENKREVVA.

Pyridoxal 5'-phosphate-binding positions include threonine 104, threonine 105, phenylalanine 132 to aspartate 135, aspartate 213, histidine 216, and tyrosine 238. N6-(pyridoxal phosphate)lysine is present on lysine 239. Pyridoxal 5'-phosphate is bound by residues tryptophan 267 and threonine 295.

Belongs to the kynureninase family. In terms of assembly, homodimer. The cofactor is pyridoxal 5'-phosphate.

The enzyme catalyses L-kynurenine + H2O = anthranilate + L-alanine + H(+). It catalyses the reaction 3-hydroxy-L-kynurenine + H2O = 3-hydroxyanthranilate + L-alanine + H(+). The protein operates within amino-acid degradation; L-kynurenine degradation; L-alanine and anthranilate from L-kynurenine: step 1/1. Its pathway is cofactor biosynthesis; NAD(+) biosynthesis; quinolinate from L-kynurenine: step 2/3. Functionally, catalyzes the cleavage of L-kynurenine (L-Kyn) and L-3-hydroxykynurenine (L-3OHKyn) into anthranilic acid (AA) and 3-hydroxyanthranilic acid (3-OHAA), respectively. This chain is Kynureninase, found in Bacillus cereus (strain ATCC 14579 / DSM 31 / CCUG 7414 / JCM 2152 / NBRC 15305 / NCIMB 9373 / NCTC 2599 / NRRL B-3711).